A 156-amino-acid chain; its full sequence is ATP synthase subunit b (156 aa).

A helical membrane pass occupies residues 7–26 (ILGQAIAFVLFVWFCMKYVW).

The protein belongs to the ATPase B chain family. In terms of assembly, F-type ATPases have 2 components, F(1) - the catalytic core - and F(0) - the membrane proton channel. F(1) has five subunits: alpha(3), beta(3), gamma(1), delta(1), epsilon(1). F(0) has three main subunits: a(1), b(2) and c(10-14). The alpha and beta chains form an alternating ring which encloses part of the gamma chain. F(1) is attached to F(0) by a central stalk formed by the gamma and epsilon chains, while a peripheral stalk is formed by the delta and b chains.

The protein localises to the cell inner membrane. Functionally, f(1)F(0) ATP synthase produces ATP from ADP in the presence of a proton or sodium gradient. F-type ATPases consist of two structural domains, F(1) containing the extramembraneous catalytic core and F(0) containing the membrane proton channel, linked together by a central stalk and a peripheral stalk. During catalysis, ATP synthesis in the catalytic domain of F(1) is coupled via a rotary mechanism of the central stalk subunits to proton translocation. Its function is as follows. Component of the F(0) channel, it forms part of the peripheral stalk, linking F(1) to F(0). The protein is ATP synthase subunit b of Pectobacterium atrosepticum (strain SCRI 1043 / ATCC BAA-672) (Erwinia carotovora subsp. atroseptica).